Here is a 188-residue protein sequence, read N- to C-terminus: Pro-FMRFamide-related neuropeptide VF (188 aa).

Residues 1–26 form the signal peptide; sequence MEIISLKRFILLTVATSSFLTSNTFC. A propeptide spanning residues 27–57 is cleaved from the precursor; the sequence is TDEFMMPHFHSKEGDGKYSQLRGIPKGEKER. Position 94 is a phenylalanine amide (Phe-94). The propeptide occupies 97-106; that stretch reads TIDEKRSPAA. Disordered regions lie at residues 116-144 and 163-188; these read SHFP…QKPL and IQSP…KPEK. Residue Phe-125 is modified to Phenylalanine amide. Positions 128 to 188 are excised as a propeptide; sequence TTARSPKTPA…TDDAERKPEK (61 aa).

It belongs to the FARP (FMRFamide related peptide) family.

It localises to the secreted. Its function is as follows. Efficiently inhibits forskolin-induced production of cAMP. Acts as a potent negative regulator of gonadotropin synthesis and secretion. Induces secretion of prolactin. Efficiently inhibits forskolin-induced production of cAMP. Blocks morphine-induced analgesia. This chain is Pro-FMRFamide-related neuropeptide VF (Npvf), found in Mus musculus (Mouse).